A 439-amino-acid polypeptide reads, in one-letter code: FAD-linked oxidoreductase phmC (439 aa).

The N-terminal stretch at 1–19 is a signal peptide; it reads MLSSILLTIFCAFLSSTGA. N-linked (GlcNAc...) asparagine glycans are attached at residues asparagine 29 and asparagine 84. In terms of domain architecture, FAD-binding PCMH-type spans 89-272; that stretch reads QGSVPSYYIQ…LSTTTRVEPK (184 aa). N-linked (GlcNAc...) asparagine glycans are attached at residues asparagine 285 and asparagine 300.

This sequence belongs to the oxygen-dependent FAD-linked oxidoreductase family. The cofactor is FAD.

Its pathway is mycotoxin biosynthesis. Functionally, FAD-linked oxidoreductase; part of the gene cluster that mediates the biosynthesis of the mycotoxins phomacins, leucine-derived cytochalasans with potent actin polymerization-inhibitory activities and monocot-specific antigerminative activities. The first step in the pathway is catalyzed by the hybrid PKS-NRPS phmA, assisted by the enoyl reductase phmE, that are responsible for fusion of the leucine precursor and the polyketide backbone to produce a 2-pyrrolidone intermediate. The polyketide synthase module (PKS) of phmA is responsible for the synthesis of the polyketide backbone and the downstream nonribosomal peptide synthetase (NRPS) amidates the carboxyl end of the polyketide with the leucine precursor. Because phmA lacks a designated enoylreductase (ER) domain, the required activity is provided the enoyl reductase phmE. Reduction by the hydrolyase phmG, followed by dehydration and intra-molecular Diels-Alder cyclization by the Diels-Alderase phmD then yield the required isoindolone-fused macrocycle. A number of oxidative steps catalyzed by the tailoring cytochrome P450 monooxygenase phmB, the FAD-linked oxidoreductase phmC and the short-chain dehydrogenase/reductase phmF, are further required to afford the final products, phomacin D and phomacin E. The chain is FAD-linked oxidoreductase phmC from Phaeosphaeria nodorum (strain SN15 / ATCC MYA-4574 / FGSC 10173) (Glume blotch fungus).